The following is a 150-amino-acid chain: Large ribosomal subunit protein bL9 (150 aa).

This sequence belongs to the bacterial ribosomal protein bL9 family.

Functionally, binds to the 23S rRNA. The sequence is that of Large ribosomal subunit protein bL9 from Methylibium petroleiphilum (strain ATCC BAA-1232 / LMG 22953 / PM1).